Consider the following 597-residue polypeptide: Cytosolic Fe-S cluster assembly factor nar1 (597 aa).

Positions 20, 62, 65, 68, 216, and 271 each coordinate [4Fe-4S] cluster. Residues Arg428–Ser449 are disordered. [4Fe-4S] cluster-binding residues include Cys462 and Cys466. The interval Arg479–Gln505 is disordered.

Belongs to the NARF family.

Component of the cytosolic Fe/S protein assembly machinery. Required for maturation of extramitochondrial Fe/S proteins. May play a role in the transfer of pre-assembled Fe/S clusters to target apoproteins. This Aspergillus niger (strain ATCC MYA-4892 / CBS 513.88 / FGSC A1513) protein is Cytosolic Fe-S cluster assembly factor nar1 (nar1).